Consider the following 202-residue polypeptide: MVGSFVFEAELRHQLGKGASRRLRHAGKVPAVLYGGGGEPVSLLLDHHKVVKNLENEATYSHVLTIRFDGREENAILKAVQRHPAKPVVMHLDFQRVSAADKIRVHVPLHFINQESSVGVKKGGVVSHGMVDVEVDCLPKDLPEYIEVDLAQVDIGGIIHLSDLKLPAGVEIHALAQGVGHDLPVASVHAPRTAEGGEGGAG.

It belongs to the bacterial ribosomal protein bL25 family. CTC subfamily. As to quaternary structure, part of the 50S ribosomal subunit; part of the 5S rRNA/L5/L18/L25 subcomplex. Contacts the 5S rRNA. Binds to the 5S rRNA independently of L5 and L18.

This is one of the proteins that binds to the 5S RNA in the ribosome where it forms part of the central protuberance. In Methylococcus capsulatus (strain ATCC 33009 / NCIMB 11132 / Bath), this protein is Large ribosomal subunit protein bL25.